A 222-amino-acid chain; its full sequence is Isoprenyl transferase (222 aa).

Aspartate 12 is an active-site residue. Aspartate 12 lines the Mg(2+) pocket. Substrate is bound by residues 13–16 (GNRR), tryptophan 17, and 57–59 (STE). The active-site Proton acceptor is asparagine 60. Substrate is bound by residues tryptophan 61, arginine 63, arginine 171, and 177–179 (RLS). Glutamate 190 provides a ligand contact to Mg(2+).

The protein belongs to the UPP synthase family. Homodimer. Mg(2+) is required as a cofactor.

In terms of biological role, catalyzes the condensation of isopentenyl diphosphate (IPP) with allylic pyrophosphates generating different type of terpenoids. The sequence is that of Isoprenyl transferase (uppS) from Campylobacter jejuni subsp. jejuni serotype O:2 (strain ATCC 700819 / NCTC 11168).